Consider the following 123-residue polypeptide: Protein Wnt-3b (123 aa).

Ser-1 carries the O-palmitoleoyl serine; by PORCN lipid modification. Residues Cys-89 and Cys-104 are joined by a disulfide bond. Asn-90 carries N-linked (GlcNAc...) asparagine glycosylation.

The protein belongs to the Wnt family. Post-translationally, palmitoleoylation is required for efficient binding to frizzled receptors. Depalmitoleoylation leads to Wnt signaling pathway inhibition.

The protein resides in the secreted. The protein localises to the extracellular space. It is found in the extracellular matrix. Its function is as follows. Ligand for members of the frizzled family of seven transmembrane receptors. Probable developmental protein. May be a signaling molecule which affects the development of discrete regions of tissues. Is likely to signal over only few cell diameters. In Meleagris gallopavo (Wild turkey), this protein is Protein Wnt-3b (WNT3B).